The primary structure comprises 229 residues: Uracil-DNA glycosylase (229 aa).

Catalysis depends on aspartate 64, which acts as the Proton acceptor.

It belongs to the uracil-DNA glycosylase (UDG) superfamily. UNG family.

The protein resides in the cytoplasm. The enzyme catalyses Hydrolyzes single-stranded DNA or mismatched double-stranded DNA and polynucleotides, releasing free uracil.. Excises uracil residues from the DNA which can arise as a result of misincorporation of dUMP residues by DNA polymerase or due to deamination of cytosine. The sequence is that of Uracil-DNA glycosylase from Salmonella choleraesuis (strain SC-B67).